The primary structure comprises 312 residues: Glyoxylate/hydroxypyruvate reductase A (312 aa).

R227 is an active-site residue. H275 serves as the catalytic Proton donor.

Belongs to the D-isomer specific 2-hydroxyacid dehydrogenase family. GhrA subfamily.

Its subcellular location is the cytoplasm. The enzyme catalyses glycolate + NADP(+) = glyoxylate + NADPH + H(+). It carries out the reaction (R)-glycerate + NAD(+) = 3-hydroxypyruvate + NADH + H(+). It catalyses the reaction (R)-glycerate + NADP(+) = 3-hydroxypyruvate + NADPH + H(+). In terms of biological role, catalyzes the NADPH-dependent reduction of glyoxylate and hydroxypyruvate into glycolate and glycerate, respectively. This Escherichia coli (strain 55989 / EAEC) protein is Glyoxylate/hydroxypyruvate reductase A.